The chain runs to 362 residues: S-adenosylmethionine-dependent nucleotide dehydratase RSAD2 (362 aa).

The disordered stretch occupies residues 49–71 (QQLQGKTEAGEPPRAQEDSHLPT). The span at 56–68 (EAGEPPRAQEDSH) shows a compositional bias: basic and acidic residues. The region spanning 70-290 (PTTPTSVNYH…LDRHKDVSCL (221 aa)) is the Radical SAM core domain. 3 residues coordinate [4Fe-4S] cluster: Cys84, Cys88, and Cys91. N6-acetyllysine is present on Lys198. Lys207 is covalently cross-linked (Glycyl lysine isopeptide (Lys-Gly) (interchain with G-Cter in ubiquitin)).

Belongs to the radical SAM superfamily. RSAD2 family. Homodimer. Interacts with IRAK1 and TRAF6. Interacts with FPPS. Interacts with HADHB. Interacts (via C-terminus) with VAPA/VAP33 (via C-terminus). The cofactor is [4Fe-4S] cluster. Post-translationally, acetylated by HAT1. HAT1-mediated acetylation of Lys-198 in turn recruits UBE4A that stimulates RSAD2 polyubiquitination leading to proteasomal degradation. 'Lys-6'-linked polyubiquitination at Lys-207 leads to RSAD2 protein degradation.

Its subcellular location is the endoplasmic reticulum membrane. The protein localises to the golgi apparatus. The protein resides in the endoplasmic reticulum. It is found in the lipid droplet. It localises to the mitochondrion. Its subcellular location is the mitochondrion inner membrane. The protein localises to the mitochondrion outer membrane. It carries out the reaction CTP + AH2 + S-adenosyl-L-methionine = 3'-deoxy-3',4'-didehydro-CTP + 5'-deoxyadenosine + L-methionine + A + H2O + H(+). With respect to regulation, IRAK1 and TRAF6 synergistically activate RSAD2 increasing its activity with CTP as substrate about 10-fold. Interferon-inducible antiviral protein which plays a major role in the cell antiviral state induced by type I and type II interferon. Catalyzes the conversion of cytidine triphosphate (CTP) to 3'-deoxy-3',4'-didehydro-CTP (ddhCTP) via a SAM-dependent radical mechanism. In turn, ddhCTP acts as a chain terminator for the RNA-dependent RNA polymerases from multiple viruses and directly inhibits viral replication. Therefore, inhibits a wide range of DNA and RNA viruses. Also promotes TLR7 and TLR9-dependent production of IFN-beta production in plasmacytoid dendritic cells (pDCs) by facilitating 'Lys-63'-linked ubiquitination of IRAK1 by TRAF6. Plays a role in CD4+ T-cells activation and differentiation. Facilitates T-cell receptor (TCR)-mediated GATA3 activation and optimal T-helper 2 (Th2) cytokine production by modulating NFKB1 and JUNB activities. Can inhibit secretion of soluble proteins. The protein is S-adenosylmethionine-dependent nucleotide dehydratase RSAD2 of Sus scrofa (Pig).